An 82-amino-acid chain; its full sequence is Small ribosomal subunit protein uS17 (82 aa).

The protein belongs to the universal ribosomal protein uS17 family. Part of the 30S ribosomal subunit.

In terms of biological role, one of the primary rRNA binding proteins, it binds specifically to the 5'-end of 16S ribosomal RNA. The protein is Small ribosomal subunit protein uS17 of Aeromonas hydrophila subsp. hydrophila (strain ATCC 7966 / DSM 30187 / BCRC 13018 / CCUG 14551 / JCM 1027 / KCTC 2358 / NCIMB 9240 / NCTC 8049).